The primary structure comprises 92 residues: UPF0235 protein PYRAB05010 (92 aa).

The protein belongs to the UPF0235 family.

This Pyrococcus abyssi (strain GE5 / Orsay) protein is UPF0235 protein PYRAB05010.